The primary structure comprises 1121 residues: Piwi-like protein ergo-1 (1121 aa).

Positions 1 to 14 are enriched in gly residues; that stretch reads MSYNNGGGGGGGGY. A disordered region spans residues 1-134; the sequence is MSYNNGGGGG…GNRGGGGGRV (134 aa). 2 stretches are compositionally biased toward basic and acidic residues: residues 15 to 29 and 40 to 77; these read RNDR…DRQN and YNDD…DRRG. The span at 99-112 shows a compositional bias: polar residues; sequence GSNQRNDNYGNNRG. The segment covering 125 to 134 has biased composition (gly residues); the sequence is GNRGGGGGRV. Residues 426–534 form the PAZ domain; that stretch reads VMTQILTKMT…MPLELVSYIV (109 aa). The Piwi domain occupies 774–1081; that stretch reads NVLKYLADNK…AAKRAKETLD (308 aa).

The protein belongs to the argonaute family. Piwi subfamily. In terms of assembly, interacts with rde-12. Interacts with rde-10. Highly expressed in the germline in hermaphrodites.

Its subcellular location is the cytoplasm. Functionally, argonaute protein required for gene silencing in the endogenous RNA interference (RNAi) pathway. Involved in the 26G RNAi pathway and associates with both unmethylated and methylated 26G small interfering RNAs (26G-siRNAs), which are a class of 26 nucleotide siRNAs that possess a guanine residue at the 5'-end. Associated 26G-siRNAs are methylated by the methyltransferase henn-1, which stabilizes the siRNAs. Association with 26G-siRNAs is required for the biogenesis of secondary 22G-siRNAs (a class of 22 nucleotide siRNAs that possess a triphosphorylated guanine residue at the 5'-end). May be involved in passenger strand cleavage of target 26G-siRNAs. This Caenorhabditis elegans protein is Piwi-like protein ergo-1.